The following is a 232-amino-acid chain: Ion-translocating oxidoreductase complex subunit E (232 aa).

The next 6 helical transmembrane spans lie at Gly-18 to Ala-38, Leu-39 to Val-59, Ile-69 to Ala-89, Gly-93 to Gly-113, Ala-127 to Ala-147, and Pro-182 to Leu-202.

It belongs to the NqrDE/RnfAE family. The complex is composed of six subunits: RnfA, RnfB, RnfC, RnfD, RnfE and RnfG.

The protein localises to the cell inner membrane. Functionally, part of a membrane-bound complex that couples electron transfer with translocation of ions across the membrane. The chain is Ion-translocating oxidoreductase complex subunit E from Shewanella sp. (strain MR-4).